Consider the following 272-residue polypeptide: Phosphonates import ATP-binding protein PhnC (272 aa).

The region spanning L2 to H244 is the ABC transporter domain. G35–S42 contributes to the ATP binding site.

Belongs to the ABC transporter superfamily. Phosphonates importer (TC 3.A.1.9.1) family. In terms of assembly, the complex is composed of two ATP-binding proteins (PhnC), two transmembrane proteins (PhnE) and a solute-binding protein (PhnD).

It is found in the cell inner membrane. The enzyme catalyses phosphonate(out) + ATP + H2O = phosphonate(in) + ADP + phosphate + H(+). Its function is as follows. Part of the ABC transporter complex PhnCDE involved in phosphonates import. Responsible for energy coupling to the transport system. In Hydrogenovibrio crunogenus (strain DSM 25203 / XCL-2) (Thiomicrospira crunogena), this protein is Phosphonates import ATP-binding protein PhnC.